The primary structure comprises 351 residues: Uroporphyrinogen decarboxylase (351 aa).

Residues 32–36 (RQAGR), F51, D82, Y157, S211, and H326 each bind substrate.

The protein belongs to the uroporphyrinogen decarboxylase family. Homodimer.

It is found in the cytoplasm. It carries out the reaction uroporphyrinogen III + 4 H(+) = coproporphyrinogen III + 4 CO2. The protein operates within porphyrin-containing compound metabolism; protoporphyrin-IX biosynthesis; coproporphyrinogen-III from 5-aminolevulinate: step 4/4. In terms of biological role, catalyzes the decarboxylation of four acetate groups of uroporphyrinogen III to yield coproporphyrinogen III. The protein is Uroporphyrinogen decarboxylase of Caulobacter vibrioides (strain ATCC 19089 / CIP 103742 / CB 15) (Caulobacter crescentus).